A 386-amino-acid polypeptide reads, in one-letter code: MIISASTDYRAAAQRRLPPFLFHYIDGGAYGEHTLRRNTADLADIALRQRILKNMSDLSLETQLFGEKLAMPVVLAPVGLTGMYARRGEVQAARAAAQKGIPFTLSTVSVCPIEEVAPAIDRPMWFQLYVLKDRGFMRSALERAQAAGVKTLVFTVDMPTPGARYRDAHSGMSGPNAAARRMLQAVTHPQWAWDVGLNGKPHDLGNVSAYRGKPTTLEDYIGWLAANFDPSISWQDLAWIREFWKGPMIIKGILDPEDAKEAVRFGADGIVVSNHGGRQLDGVLSTAHALPAIADAVKGDITILADSGIRSGLDVVRMIALGADGVMLGRAFVYALAAAGEAGVVNLLNLIEKEMRVAMTLTGAKSIADITSDSLVQVTQRRLDGL.

The region spanning 1 to 380 (MIISASTDYR…TSDSLVQVTQ (380 aa)) is the FMN hydroxy acid dehydrogenase domain. Residue Tyr24 coordinates substrate. FMN contacts are provided by Ser106 and Gln127. Residue Tyr129 participates in substrate binding. Thr155 is a binding site for FMN. Substrate is bound at residue Arg164. Lys251 is an FMN binding site. His275 acts as the Proton acceptor in catalysis. Arg278 is a substrate binding site. 306–330 (DSGIRSGLDVVRMIALGADGVMLGR) is an FMN binding site.

Belongs to the FMN-dependent alpha-hydroxy acid dehydrogenase family. FMN serves as cofactor.

It is found in the cell inner membrane. The enzyme catalyses (S)-lactate + A = pyruvate + AH2. Catalyzes the conversion of L-lactate to pyruvate. Is coupled to the respiratory chain. The polypeptide is L-lactate dehydrogenase (Pectobacterium atrosepticum (strain SCRI 1043 / ATCC BAA-672) (Erwinia carotovora subsp. atroseptica)).